The primary structure comprises 363 residues: Chorismate synthase (363 aa).

Residue Arg48 coordinates NADP(+). Residues 125–127 (RSS), 238–239 (NA), Gly278, 293–297 (KPTAS), and Arg319 each bind FMN.

Belongs to the chorismate synthase family. Homotetramer. FMNH2 is required as a cofactor.

The catalysed reaction is 5-O-(1-carboxyvinyl)-3-phosphoshikimate = chorismate + phosphate. The protein operates within metabolic intermediate biosynthesis; chorismate biosynthesis; chorismate from D-erythrose 4-phosphate and phosphoenolpyruvate: step 7/7. Catalyzes the anti-1,4-elimination of the C-3 phosphate and the C-6 proR hydrogen from 5-enolpyruvylshikimate-3-phosphate (EPSP) to yield chorismate, which is the branch point compound that serves as the starting substrate for the three terminal pathways of aromatic amino acid biosynthesis. This reaction introduces a second double bond into the aromatic ring system. In Acinetobacter baumannii (strain SDF), this protein is Chorismate synthase.